Consider the following 436-residue polypeptide: Glutamyl-tRNA(Gln) amidotransferase subunit D (436 aa).

An Asparaginase/glutaminase domain is found at 91 to 420; that stretch reads QNISIISTGG…GEVAKLMNKN (330 aa). Catalysis depends on residues Thr101, Thr177, Asp178, and Lys254.

Belongs to the asparaginase 1 family. GatD subfamily. In terms of assembly, heterodimer of GatD and GatE.

It catalyses the reaction L-glutamyl-tRNA(Gln) + L-glutamine + ATP + H2O = L-glutaminyl-tRNA(Gln) + L-glutamate + ADP + phosphate + H(+). Functionally, allows the formation of correctly charged Gln-tRNA(Gln) through the transamidation of misacylated Glu-tRNA(Gln) in organisms which lack glutaminyl-tRNA synthetase. The reaction takes place in the presence of glutamine and ATP through an activated gamma-phospho-Glu-tRNA(Gln). The GatDE system is specific for glutamate and does not act on aspartate. The chain is Glutamyl-tRNA(Gln) amidotransferase subunit D from Methanobrevibacter smithii (strain ATCC 35061 / DSM 861 / OCM 144 / PS).